Consider the following 336-residue polypeptide: Glyceraldehyde-3-phosphate dehydrogenase (336 aa).

Residues 12-13 (RI), aspartate 34, and serine 120 contribute to the NAD(+) site. D-glyceraldehyde 3-phosphate is bound by residues 150–152 (SCT), threonine 181, arginine 198, 211–212 (TG), and arginine 234. Cysteine 151 (nucleophile) is an active-site residue. Asparagine 316 serves as a coordination point for NAD(+).

The protein belongs to the glyceraldehyde-3-phosphate dehydrogenase family. In terms of assembly, homotetramer.

The protein localises to the cytoplasm. It carries out the reaction D-glyceraldehyde 3-phosphate + phosphate + NAD(+) = (2R)-3-phospho-glyceroyl phosphate + NADH + H(+). It functions in the pathway carbohydrate degradation; glycolysis; pyruvate from D-glyceraldehyde 3-phosphate: step 1/5. In terms of biological role, catalyzes the oxidative phosphorylation of glyceraldehyde 3-phosphate (G3P) to 1,3-bisphosphoglycerate (BPG) using the cofactor NAD. The first reaction step involves the formation of a hemiacetal intermediate between G3P and a cysteine residue, and this hemiacetal intermediate is then oxidized to a thioester, with concomitant reduction of NAD to NADH. The reduced NADH is then exchanged with the second NAD, and the thioester is attacked by a nucleophilic inorganic phosphate to produce BPG. This chain is Glyceraldehyde-3-phosphate dehydrogenase (gapA), found in Staphylococcus aureus.